A 354-amino-acid chain; its full sequence is Guanine nucleotide-binding protein G(o) subunit alpha (354 aa).

Residue G2 is the site of N-myristoyl glycine attachment. C3 is lipidated: S-palmitoyl cysteine. The 323-residue stretch at 32-354 folds into the G-alpha domain; sequence KDVKLLLLGA…ANNLRGCGLY (323 aa). Positions 35 to 48 are G1 motif; the sequence is KLLLLGAGESGKST. GTP contacts are provided by E43, K46, S47, T48, S152, L176, R177, T178, and R179. S47 is a binding site for Mg(2+). The segment at 174–182 is G2 motif; it reads DILRTRVKT. R179 carries the post-translational modification ADP-ribosylarginine; by cholera toxin. T182 is a binding site for Mg(2+). Residues 197-206 are G3 motif; sequence FRLFDVGGQR. The residue at position 205 (Q205) is a 5-glutamyl histamine. A G4 motif region spans residues 266-273; sequence ILFLNKKD. GTP contacts are provided by N270, D273, and C325. Residues 324–329 form a G5 motif region; the sequence is TCATDT. C351 carries the S-palmitoyl cysteine lipid modification. ADP-ribosylcysteine; by pertussis toxin is present on C351.

This sequence belongs to the G-alpha family. G(i/o/t/z) subfamily. G proteins are composed of 3 units; alpha, beta and gamma. The alpha chain contains the guanine nucleotide binding site. Forms a complex with GNB1 and GNG3. Interacts with RGS14. Interacts with RGS16. Interacts with RGS19. Interacts (when palmitoylated) with ADGRG3. Post-translationally, histaminylated at Gln-205 residues by TGM2. Palmitoylated at Cys-351, leading to binding to ADGRG3.

Its subcellular location is the cell membrane. The protein localises to the membrane. The catalysed reaction is GTP + H2O = GDP + phosphate + H(+). The GTPase activity is promoted by GTPAse activators, such as RGS14, RGS16 and RGS19. Its function is as follows. Guanine nucleotide-binding proteins (G proteins) function as transducers downstream of G protein-coupled receptors (GPCRs) in numerous signaling cascades. The alpha chain contains the guanine nucleotide binding site and alternates between an active, GTP-bound state and an inactive, GDP-bound state. Signaling by an activated GPCR promotes GDP release and GTP binding. The alpha subunit has a low GTPase activity that converts bound GTP to GDP, thereby terminating the signal. Both GDP release and GTP hydrolysis are modulated by numerous regulatory proteins. Signaling is mediated via effector proteins, such as adenylate cyclase. Inhibits adenylate cyclase activity, leading to decreased intracellular cAMP levels. This Homo sapiens (Human) protein is Guanine nucleotide-binding protein G(o) subunit alpha (GNAO1).